Here is a 443-residue protein sequence, read N- to C-terminus: Glutamine synthetase (443 aa).

One can recognise a GS beta-grasp domain in the interval 16-97 (KRIKFVQLIF…VYGYIYKDGK (82 aa)). The GS catalytic domain maps to 103 to 443 (PRGVLRRTLE…EWELERYFFI (341 aa)). Positions 126 and 128 each coordinate Mg(2+). Glu-176 contributes to the ATP binding site. The Mg(2+) site is built by Glu-181 and Glu-188. Residue Gly-233 coordinates L-glutamate. Residue His-237 participates in Mg(2+) binding. ATP is bound by residues 239–241 (HIS) and Ser-241. Positions 287, 293, and 305 each coordinate L-glutamate. The ATP site is built by Arg-305 and Arg-310. Residue Glu-322 participates in Mg(2+) binding. Arg-324 lines the L-glutamate pocket.

It belongs to the glutamine synthetase family. As to quaternary structure, oligomer of 12 subunits arranged in the form of two hexagons. Mg(2+) is required as a cofactor.

The protein localises to the cytoplasm. The enzyme catalyses L-glutamate + NH4(+) + ATP = L-glutamine + ADP + phosphate + H(+). In terms of biological role, probably involved in nitrogen metabolism via ammonium assimilation. Catalyzes the ATP-dependent biosynthesis of glutamine from glutamate and ammonia. This Pyrococcus horikoshii (strain ATCC 700860 / DSM 12428 / JCM 9974 / NBRC 100139 / OT-3) protein is Glutamine synthetase.